Reading from the N-terminus, the 472-residue chain is Cysteine--tRNA ligase (472 aa).

Cys-29 provides a ligand contact to Zn(2+). The short motif at 31–41 (ITVYDYCHLGH) is the 'HIGH' region element. 3 residues coordinate Zn(2+): Cys-214, His-239, and Glu-243. The short motif at 271 to 275 (KMSKS) is the 'KMSKS' region element. Lys-274 lines the ATP pocket.

This sequence belongs to the class-I aminoacyl-tRNA synthetase family. In terms of assembly, monomer. The cofactor is Zn(2+).

Its subcellular location is the cytoplasm. The catalysed reaction is tRNA(Cys) + L-cysteine + ATP = L-cysteinyl-tRNA(Cys) + AMP + diphosphate. This chain is Cysteine--tRNA ligase, found in Picosynechococcus sp. (strain ATCC 27264 / PCC 7002 / PR-6) (Agmenellum quadruplicatum).